Consider the following 326-residue polypeptide: Adenosine receptor A1 (326 aa).

Topologically, residues 1 to 10 (MPPSISAFQA) are extracellular. The helical transmembrane segment at 11 to 33 (AYIGIEVLIALVSVPGNVLVIWA) threads the bilayer. The Cytoplasmic segment spans residues 34–46 (VKVNQALRDATFC). A helical transmembrane segment spans residues 47–69 (FIVSLAVADVAVGALVIPLAILI). The Extracellular segment spans residues 70-80 (NIGPRTYFHTC). Cys80 and Cys169 are disulfide-bonded. A helical membrane pass occupies residues 81 to 102 (LKVACPVLILTQSSILALLAIA). Residues 103 to 123 (VDRYLRVKIPLRYKTVVTPRR) are Cytoplasmic-facing. Residues 124 to 146 (AVVAITGCWILSFVVGLTPMFGW) traverse the membrane as a helical segment. The Extracellular segment spans residues 147-176 (NNLSAVERDWLANGSVGEPVIECQFEKVIS). Residues Asn148 and Asn159 are each glycosylated (N-linked (GlcNAc...) asparagine). The helical transmembrane segment at 177–201 (MEYMVYFNFFVWVLPPLLLMVLIYM) threads the bilayer. The Cytoplasmic portion of the chain corresponds to 202-235 (EVFYLIRKQLNKKVSASSGDPQKYYGKELKIAKS). Residues 236–259 (LALILFLFALSWLPLHILNCITLF) form a helical membrane-spanning segment. At 260–267 (CPSCHMPR) the chain is on the extracellular side. The helical transmembrane segment at 268–292 (ILIYIAIFLSHGNSAMNPIVYAFRI) threads the bilayer. Over 293 to 326 (QKFRVTFLKIWNDHFRCQPAPPVDEDAPAERPDD) the chain is Cytoplasmic. A lipid anchor (S-palmitoyl cysteine) is attached at Cys309.

It belongs to the G-protein coupled receptor 1 family.

The protein localises to the cell membrane. In terms of biological role, receptor for adenosine. The activity of this receptor is mediated by G proteins which inhibit adenylyl cyclase. The sequence is that of Adenosine receptor A1 (ADORA1) from Bos taurus (Bovine).